The following is a 259-amino-acid chain: MPRLHDHVWNYPSAGAARPYSLPRGMIAAAACPQGPGVPEPEHAPRGQRAGTTGCSARPGSWHHDLVQRSLVLFSFGVVLALVLNLLQIQRNVTLFPDEVIATIFSSAWWVPPCCGTAAAVVGLLYPCIDSHLGEPHKFKREWASVMRCIAVFVGINHASAKLDFANNVQLSLTLAALSLGLWWTFDRSRSGLGLGITIAFLATLITQFLVYNGVYQYTSPDFLYIRSWLPCIFFSGGVTVGNIGRQLAMGVPEKPHSD.

At 1–66 (MPRLHDHVWN…ARPGSWHHDL (66 aa)) the chain is on the cytoplasmic side. The tract at residues 36–55 (PGVPEPEHAPRGQRAGTTGC) is disordered. A helical transmembrane segment spans residues 67–89 (VQRSLVLFSFGVVLALVLNLLQI). Residues 90-108 (QRNVTLFPDEVIATIFSSA) are Extracellular-facing. The helical transmembrane segment at 109-126 (WWVPPCCGTAAAVVGLLY) threads the bilayer. Residues 127 to 141 (PCIDSHLGEPHKFKR) lie on the Cytoplasmic side of the membrane. Residues Lys-138 and Lys-140 each participate in a glycyl lysine isopeptide (Lys-Gly) (interchain with G-Cter in ubiquitin) cross-link. The chain crosses the membrane as a helical span at residues 142 to 164 (EWASVMRCIAVFVGINHASAKLD). Residues 165 to 167 (FAN) are Extracellular-facing. Residues 168 to 186 (NVQLSLTLAALSLGLWWTF) traverse the membrane as a helical segment. The Cytoplasmic portion of the chain corresponds to 187-191 (DRSRS). The residue at position 189 (Ser-189) is a Phosphoserine. Residues 192–213 (GLGLGITIAFLATLITQFLVYN) form a helical membrane-spanning segment. Residues 214-227 (GVYQYTSPDFLYIR) are Extracellular-facing. A helical membrane pass occupies residues 228–245 (SWLPCIFFSGGVTVGNIG). Over 246-259 (RQLAMGVPEKPHSD) the chain is Cytoplasmic. A KxHxx motif is present at residues 253 to 259 (PEKPHSD).

It belongs to the INSIG family. As to quaternary structure, interacts with SCAP; interaction is direct and only takes place in the presence of sterols; it prevents interaction between SCAP and the coat protein complex II (COPII). Associates with the SCAP-SREBP complex (composed of SCAP and SREBF1/SREBP1 or SREBF2/SREBP2); association is mediated via its interaction with SCAP and only takes place in the presence of sterols. Interaction with SCAP is mutually exclusive with PAQR3. Interacts with HMGCR (via its SSD); the interaction, accelerated by sterols, leads to the recruitment of HMGCR to AMFR/gp78 for its ubiquitination by the sterol-mediated ERAD pathway. Interacts with AMFR/gp78 (via its membrane domain); the interaction recruits HMCR at the ER membrane for its ubiquitination and degradation by the sterol-mediated ERAD pathway. Interacts with SOAT2/ACAT2; leading to promote recruitment of AMFR/gp78 and subsequent ubiquitination of SOAT2/ACAT2. Interacts with RNF139. Interacts with RNF145. Post-translationally, phosphorylation at Ser-189 by PCK1 reduces binding to oxysterol, disrupting the interaction between INSIG1 and SCAP, thereby promoting nuclear translocation of SREBP proteins (SREBF1/SREBP1 or SREBF2/SREBP2) and subsequent transcription of downstream lipogenesis-related genes. In terms of processing, ubiquitinated by AMFR/gp78 in response to sterol deprivation, leading to its degradation: when the SCAP-SREBP complex becomes dissociated from INSIG1, INSIG1 is then ubiquitinated and degraded in proteasomes. Although ubiquitination is required for rapid INSIG1 degradation, it is not required for release of the SCAP-SREBP complex. Ubiquitinated by RNF139.

It is found in the endoplasmic reticulum membrane. Functionally, oxysterol-binding protein that mediates feedback control of cholesterol synthesis by controlling both endoplasmic reticulum to Golgi transport of SCAP and degradation of HMGCR. Acts as a negative regulator of cholesterol biosynthesis by mediating the retention of the SCAP-SREBP complex in the endoplasmic reticulum, thereby blocking the processing of sterol regulatory element-binding proteins (SREBPs) SREBF1/SREBP1 and SREBF2/SREBP2. Binds oxysterol, including 25-hydroxycholesterol, regulating interaction with SCAP and retention of the SCAP-SREBP complex in the endoplasmic reticulum. In presence of oxysterol, interacts with SCAP, retaining the SCAP-SREBP complex in the endoplasmic reticulum, thereby preventing SCAP from escorting SREBF1/SREBP1 and SREBF2/SREBP2 to the Golgi. Sterol deprivation or phosphorylation by PCK1 reduce oxysterol-binding, disrupting the interaction between INSIG1 and SCAP, thereby promoting Golgi transport of the SCAP-SREBP complex, followed by processing and nuclear translocation of SREBF1/SREBP1 and SREBF2/SREBP2. Also regulates cholesterol synthesis by regulating degradation of HMGCR: initiates the sterol-mediated ubiquitin-mediated endoplasmic reticulum-associated degradation (ERAD) of HMGCR via recruitment of the reductase to the ubiquitin ligases AMFR/gp78 and/or RNF139. Also regulates degradation of SOAT2/ACAT2 when the lipid levels are low: initiates the ubiquitin-mediated degradation of SOAT2/ACAT2 via recruitment of the ubiquitin ligases AMFR/gp78. This chain is Insulin-induced gene 1 protein, found in Mus musculus (Mouse).